Here is a 406-residue protein sequence, read N- to C-terminus: uncharacterized protein (406 aa).

10 helical membrane passes run serine 7–isoleucine 27, valine 43–isoleucine 63, leucine 69–leucine 89, leucine 98–leucine 118, glycine 155–phenylalanine 175, isoleucine 220–leucine 240, tryptophan 253–tyrosine 273, leucine 297–methionine 317, valine 352–valine 372, and leucine 374–leucine 394.

It belongs to the major facilitator superfamily.

It is found in the cell membrane. This is an uncharacterized protein from Bacillus subtilis (strain 168).